The primary structure comprises 711 residues: DNA topoisomerase 3 (711 aa).

The region spanning 2–135 (KSLILAEKPS…IRRLWISSVT (134 aa)) is the Toprim domain. Mg(2+) contacts are provided by glutamate 8 and aspartate 104. One can recognise a Topo IA-type catalytic domain in the interval 152–580 (YNDLYYAALA…EMKDFTKDVV (429 aa)). The segment at 186–191 (SLGRVQ) is interaction with DNA. Tyrosine 305 functions as the O-(5'-phospho-DNA)-tyrosine intermediate in the catalytic mechanism. The segment at 691–711 (MNKNEGLDNNPFKDALKNLNL) is disordered.

It belongs to the type IA topoisomerase family. The cofactor is Mg(2+).

It carries out the reaction ATP-independent breakage of single-stranded DNA, followed by passage and rejoining.. Releases the supercoiling and torsional tension of DNA, which is introduced during the DNA replication and transcription, by transiently cleaving and rejoining one strand of the DNA duplex. Introduces a single-strand break via transesterification at a target site in duplex DNA. The scissile phosphodiester is attacked by the catalytic tyrosine of the enzyme, resulting in the formation of a DNA-(5'-phosphotyrosyl)-enzyme intermediate and the expulsion of a 3'-OH DNA strand. The free DNA strand then undergoes passage around the unbroken strand, thus removing DNA supercoils. Finally, in the religation step, the DNA 3'-OH attacks the covalent intermediate to expel the active-site tyrosine and restore the DNA phosphodiester backbone. This Staphylococcus aureus (strain Mu50 / ATCC 700699) protein is DNA topoisomerase 3.